The following is a 137-amino-acid chain: uncharacterized protein (137 aa).

Helical transmembrane passes span 26 to 42 (CSLC…FFAM) and 52 to 69 (ASIP…GSIL).

The protein resides in the membrane. This is an uncharacterized protein from Saccharomyces cerevisiae (strain ATCC 204508 / S288c) (Baker's yeast).